The following is a 133-amino-acid chain: MTENRRMKKVNAMLRESIAKVILKDVKHPKISNRWITITRVSLSRDLQSARVYVSIMPHENSQEETLAALKASAGFIACQASKDVVLKYFPDLNFYMEDIFSPQDHIESLLLKIAEQDKKLTHNNNNSSELHD.

This sequence belongs to the RbfA family. In terms of assembly, monomer. Binds 30S ribosomal subunits, but not 50S ribosomal subunits or 70S ribosomes.

The protein localises to the cytoplasm. One of several proteins that assist in the late maturation steps of the functional core of the 30S ribosomal subunit. Associates with free 30S ribosomal subunits (but not with 30S subunits that are part of 70S ribosomes or polysomes). Required for efficient processing of 16S rRNA. May interact with the 5'-terminal helix region of 16S rRNA. This chain is Ribosome-binding factor A, found in Chlamydia muridarum (strain MoPn / Nigg).